The primary structure comprises 1293 residues: DNA repair protein complementing XP-C cells homolog (1293 aa).

5 disordered regions span residues 1 to 199, 217 to 239, 255 to 341, 514 to 640, and 658 to 919; these read MSDE…FEDK, ERTR…QAAT, QSVE…NISG, DLIP…SKCL, and LSSK…EPAK. Basic and acidic residues predominate over residues 18–30; sequence DEWKPSKDVKGGE. A phosphoserine mark is found at Ser-31, Ser-32, and Ser-37. Acidic residues predominate over residues 31–43; the sequence is SSDDDDSDFDELQ. A compositionally biased stretch (low complexity) spans 51-60; sequence SSGRSSAVAG. Composition is skewed to polar residues over residues 101–130 and 226–238; these read FPTS…SGAR and RNVT…SQAA. The segment covering 288–301 has biased composition (basic residues); that stretch reads SKTKSTRIKRHTKT. A compositionally biased stretch (acidic residues) spans 313–335; it reads DTDDSDFEEVADADLSSDQDDGE. Positions 520–578 are enriched in basic and acidic residues; it reads LRPDDKNKSQTVESERESEDEKPKKDKKAGKPAEKESSKSTISKEAEKKNNAKKAEAKP. Phosphoserine occurs at positions 533 and 537. Positions 580 to 594 are enriched in low complexity; that stretch reads SKSTTKGSETTKSGT. The span at 598-612 shows a compositional bias: basic and acidic residues; it reads VKKELSLSSKLVEKS. The segment covering 658 to 692 has biased composition (low complexity); the sequence is LSSKLVLKSKNQSSFSSNKSDTSFEENPSTSSSSK. Basic and acidic residues predominate over residues 693-711; it reads SLKEETAKLSSSKLEDKKV. The segment covering 720-737 has biased composition (polar residues); the sequence is KVQSSLLKRVTTQNISES. Positions 806-818 are enriched in basic and acidic residues; that stretch reads HLQEQRNTRETRS. Phosphoserine is present on residues Ser-908 and Ser-911. 3 short sequence motifs (nuclear localization signal) span residues 922 to 938, 1195 to 1211, and 1275 to 1291; these read KKAP…RKDR, KKTV…ICKK, and KKLI…KKKY.

This sequence belongs to the XPC family. In terms of assembly, heterodimer.

It is found in the nucleus. In terms of biological role, involved in DNA excision repair. May play a part in DNA damage recognition and/or in altering chromatin structure to allow access by damage-processing enzymes. Involved in nucleotide excision repair of DNA damaged with UV light, bulky adducts, or cross-linking agents. This is DNA repair protein complementing XP-C cells homolog from Drosophila melanogaster (Fruit fly).